Consider the following 265-residue polypeptide: MKEDSCLQIGGKSFSSRLMVGTGKYTSSEVMLESLANTESEIVTVAVRRIQNNQNGENLLEKIDWKKFWMLPNTAGCTNSDEAIRIAILGRELAKLSGQEENNFVKLEVIPDKKYLLPDPIETLKAAEILINKDFIVLPYINADPILAKKLEEIGCSTVMPLGSPIGSGQGLLNLSNISIIIENSNIPVIIDAGIGVPSEASQAMELGADGVLINSAIALAKNPLKMAKAMNYGVKAGREAFLAGRIEKQKLANASSPEINISIK.

The Schiff-base intermediate with DXP role is filled by K106. 1-deoxy-D-xylulose 5-phosphate-binding positions include G167, 193–194, and 215–216; these read AG and NS.

Belongs to the ThiG family. In terms of assembly, homotetramer. Forms heterodimers with either ThiH or ThiS.

It is found in the cytoplasm. The catalysed reaction is [ThiS sulfur-carrier protein]-C-terminal-Gly-aminoethanethioate + 2-iminoacetate + 1-deoxy-D-xylulose 5-phosphate = [ThiS sulfur-carrier protein]-C-terminal Gly-Gly + 2-[(2R,5Z)-2-carboxy-4-methylthiazol-5(2H)-ylidene]ethyl phosphate + 2 H2O + H(+). Its pathway is cofactor biosynthesis; thiamine diphosphate biosynthesis. In terms of biological role, catalyzes the rearrangement of 1-deoxy-D-xylulose 5-phosphate (DXP) to produce the thiazole phosphate moiety of thiamine. Sulfur is provided by the thiocarboxylate moiety of the carrier protein ThiS. In vitro, sulfur can be provided by H(2)S. The polypeptide is Thiazole synthase (Prochlorococcus marinus subsp. pastoris (strain CCMP1986 / NIES-2087 / MED4)).